The following is a 616-amino-acid chain: Tumor necrosis factor receptor superfamily member 11A (616 aa).

An N-terminal signal peptide occupies residues Met-1 to Gln-29. The Extracellular segment spans residues Ile-30–Pro-212. Disulfide bonds link Cys-34/Cys-46, Cys-47/Cys-60, Cys-50/Cys-68, Cys-71/Cys-86, Cys-92/Cys-112, Cys-114/Cys-127, Cys-124/Cys-126, Cys-133/Cys-151, and Cys-154/Cys-169. TNFR-Cys repeat units lie at residues Cys-34–Cys-68, Cys-71–Cys-112, Cys-114–Cys-151, and Cys-154–Cys-194. Residue Asn-105 is glycosylated (N-linked (GlcNAc...) asparagine). Na(+)-binding residues include Cys-133, Ala-134, and Ser-160. N-linked (GlcNAc...) asparagine glycosylation occurs at Asn-174. The cysteines at positions 175 and 194 are disulfide-linked. A helical transmembrane segment spans residues Gly-213–Val-233. At Cys-234–Ala-616 the chain is on the cytoplasmic side. Residues Pro-468 to Ser-536 form a disordered region. Residues Glu-483–Pro-493 show a composition bias toward basic and acidic residues. The segment covering Gly-499 to Gly-508 has biased composition (low complexity). Residues Asn-524–Ser-536 are compositionally biased toward polar residues. Residues Gly-544–Val-549 form a required for interaction with EEIG1 and osteoclast differentiation region. A disordered region spans residues Gln-556–Ala-616. A compositionally biased stretch (basic and acidic residues) spans Val-570–Ser-580. The residue at position 580 (Ser-580) is a Phosphoserine.

In terms of assembly, binds to the clefts between the subunits of the TNFSF11 ligand trimer to form a heterohexamer. Part of a complex composed of EEIG1, TNFRSF11A/RANK, PLCG2, GAB2, TEC and BTK; complex formation increases in the presence of TNFSF11/RANKL. Interacts with TRAF1, TRAF2, TRAF3, TRAF5 and TRAF6. Interacts (via cytoplasmic domain) with GAB2. Interacts (via cytoplasmic domain); with EEIG1 (via N-terminus); when in the presence of TNFSF11/RANKL. In terms of tissue distribution, ubiquitous expression with high levels in skeletal muscle, thymus, liver, colon, small intestine and adrenal gland.

The protein resides in the cell membrane. The protein localises to the membrane raft. Its function is as follows. Receptor for TNFSF11/RANKL/TRANCE/OPGL; essential for RANKL-mediated osteoclastogenesis. Its interaction with EEIG1 promotes osteoclastogenesis via facilitating the transcription of NFATC1 and activation of PLCG2. Involved in the regulation of interactions between T-cells and dendritic cells. This chain is Tumor necrosis factor receptor superfamily member 11A (TNFRSF11A), found in Homo sapiens (Human).